Consider the following 456-residue polypeptide: Maturase-like protein 1 (456 aa).

The protein to group II intron maturases.

It is found in the plastid. Functionally, could be required for group III intron excision. In Euglena longa (Euglenophycean alga), this protein is Maturase-like protein 1 (mat1).